The sequence spans 500 residues: Cytochrome P450 2D27 (500 aa).

C446 is a binding site for heme.

It belongs to the cytochrome P450 family. The cofactor is heme. As to expression, expressed in liver, but not in kidney, small intestine, and brain.

The protein localises to the endoplasmic reticulum membrane. The protein resides in the microsome membrane. In terms of biological role, has bufuralol 1'-hydroxylase and debrisoquine 4-hydroxylase activities. The polypeptide is Cytochrome P450 2D27 (CYP2D27) (Mesocricetus auratus (Golden hamster)).